The chain runs to 227 residues: 2-C-methyl-D-erythritol 4-phosphate cytidylyltransferase (227 aa).

This sequence belongs to the IspD/TarI cytidylyltransferase family. IspD subfamily.

It carries out the reaction 2-C-methyl-D-erythritol 4-phosphate + CTP + H(+) = 4-CDP-2-C-methyl-D-erythritol + diphosphate. It participates in isoprenoid biosynthesis; isopentenyl diphosphate biosynthesis via DXP pathway; isopentenyl diphosphate from 1-deoxy-D-xylulose 5-phosphate: step 2/6. Catalyzes the formation of 4-diphosphocytidyl-2-C-methyl-D-erythritol from CTP and 2-C-methyl-D-erythritol 4-phosphate (MEP). This chain is 2-C-methyl-D-erythritol 4-phosphate cytidylyltransferase, found in Deinococcus geothermalis (strain DSM 11300 / CIP 105573 / AG-3a).